A 114-amino-acid polypeptide reads, in one-letter code: MGKVLVEAKGIGLRSTPSKLNLVADLIRGKDVSVAMMYLKFCKKKSAGYISKVLKSAVANAQANYNVDLDNLYVKEVLVGKSFSLRRVHARARGKACRVHKHYGNVIIKLFERI.

Belongs to the universal ribosomal protein uL22 family. In terms of assembly, part of the 50S ribosomal subunit.

In terms of biological role, this protein binds specifically to 23S rRNA; its binding is stimulated by other ribosomal proteins, e.g. L4, L17, and L20. It is important during the early stages of 50S assembly. It makes multiple contacts with different domains of the 23S rRNA in the assembled 50S subunit and ribosome. Functionally, the globular domain of the protein is located near the polypeptide exit tunnel on the outside of the subunit, while an extended beta-hairpin is found that lines the wall of the exit tunnel in the center of the 70S ribosome. This chain is Large ribosomal subunit protein uL22, found in Ehrlichia canis (strain Jake).